Here is a 277-residue protein sequence, read N- to C-terminus: Thymidylate synthase (277 aa).

R21 contacts dUMP. Position 51 (H51) interacts with (6R)-5,10-methylene-5,6,7,8-tetrahydrofolate. 139–140 (RR) contacts dUMP. C159 acts as the Nucleophile in catalysis. DUMP is bound by residues 179-182 (RSAD), N190, and 220-222 (HIY). D182 lines the (6R)-5,10-methylene-5,6,7,8-tetrahydrofolate pocket. Residue A276 coordinates (6R)-5,10-methylene-5,6,7,8-tetrahydrofolate.

It belongs to the thymidylate synthase family. Bacterial-type ThyA subfamily. In terms of assembly, homodimer.

It is found in the cytoplasm. The catalysed reaction is dUMP + (6R)-5,10-methylene-5,6,7,8-tetrahydrofolate = 7,8-dihydrofolate + dTMP. The protein operates within pyrimidine metabolism; dTTP biosynthesis. In terms of biological role, catalyzes the reductive methylation of 2'-deoxyuridine-5'-monophosphate (dUMP) to 2'-deoxythymidine-5'-monophosphate (dTMP) while utilizing 5,10-methylenetetrahydrofolate (mTHF) as the methyl donor and reductant in the reaction, yielding dihydrofolate (DHF) as a by-product. This enzymatic reaction provides an intracellular de novo source of dTMP, an essential precursor for DNA biosynthesis. This is Thymidylate synthase from Ruegeria sp. (strain TM1040) (Silicibacter sp.).